The following is a 171-amino-acid chain: Terminase, small subunit (171 aa).

This sequence belongs to the P23virus small terminase family. As to quaternary structure, homononamer; forms a ring-like structure through which genomic DNA is translocated into the capsid. Heterodimer with the terminase large subunit; the active complex is probably heterooligomeric.

In terms of biological role, the terminase small subunit binds to the packaging initiation site and regulates the ATPase activity of the terminase large subunit. The terminase lies at a unique vertex of the procapsid and is composed of two subunits, a small terminase subunit involved in viral DNA recognition (packaging sequence), and a large terminase subunit. Both terminase subunits heterooligomerize and are docked on the portal protein to form the packaging machine. In Thermus phage G20c (Thermus thermophilus phage G20c), this protein is Terminase, small subunit.